The sequence spans 567 residues: Dihydroxy-acid dehydratase (567 aa).

Residue C52 coordinates [2Fe-2S] cluster. Position 84 (D84) interacts with Mg(2+). C125 lines the [2Fe-2S] cluster pocket. Mg(2+) is bound by residues D126 and K127. At K127 the chain carries N6-carboxylysine. C197 serves as a coordination point for [2Fe-2S] cluster. Residue E448 coordinates Mg(2+). S474 (proton acceptor) is an active-site residue.

The protein belongs to the IlvD/Edd family. As to quaternary structure, homodimer. [2Fe-2S] cluster is required as a cofactor. It depends on Mg(2+) as a cofactor.

It carries out the reaction (2R)-2,3-dihydroxy-3-methylbutanoate = 3-methyl-2-oxobutanoate + H2O. It catalyses the reaction (2R,3R)-2,3-dihydroxy-3-methylpentanoate = (S)-3-methyl-2-oxopentanoate + H2O. Its pathway is amino-acid biosynthesis; L-isoleucine biosynthesis; L-isoleucine from 2-oxobutanoate: step 3/4. It participates in amino-acid biosynthesis; L-valine biosynthesis; L-valine from pyruvate: step 3/4. Functions in the biosynthesis of branched-chain amino acids. Catalyzes the dehydration of (2R,3R)-2,3-dihydroxy-3-methylpentanoate (2,3-dihydroxy-3-methylvalerate) into 2-oxo-3-methylpentanoate (2-oxo-3-methylvalerate) and of (2R)-2,3-dihydroxy-3-methylbutanoate (2,3-dihydroxyisovalerate) into 2-oxo-3-methylbutanoate (2-oxoisovalerate), the penultimate precursor to L-isoleucine and L-valine, respectively. The sequence is that of Dihydroxy-acid dehydratase from Streptococcus pneumoniae (strain CGSP14).